A 546-amino-acid polypeptide reads, in one-letter code: Probable Xaa-Pro aminopeptidase pepP (546 aa).

Mn(2+)-binding residues include Asp-341, Asp-352, Glu-475, and Glu-515.

This sequence belongs to the peptidase M24B family. The cofactor is Mn(2+).

The enzyme catalyses Release of any N-terminal amino acid, including proline, that is linked to proline, even from a dipeptide or tripeptide.. Functionally, catalyzes the removal of a penultimate prolyl residue from the N-termini of peptides. The protein is Probable Xaa-Pro aminopeptidase pepP (pepP) of Sclerotinia sclerotiorum (strain ATCC 18683 / 1980 / Ss-1) (White mold).